The sequence spans 846 residues: Enhancer of polycomb-like protein 1 (846 aa).

5 disordered regions span residues 169 to 204 (FNSKAEGSSGDVKSDKEQGRGMRVKGKDREKEKGDA), 391 to 466 (TSDE…APDA), 587 to 609 (EKKRPRSIDEVEEEMQEQSPKAM), 682 to 702 (AADAKPPPAPIFQKPPAPQPN), and 759 to 804 (QVQA…GVKQ). Over residues 180 to 203 (VKSDKEQGRGMRVKGKDREKEKGD) the composition is skewed to basic and acidic residues. The span at 411 to 426 (PSLSGQTPLTSGQSSS) shows a compositional bias: polar residues. Positions 432–452 (TDKDREERAQRERYDAQRNAE) are enriched in basic and acidic residues. Residues 434-490 (KDREERAQRERYDAQRNAERSGILSGRSNAPDALKERLQALQQKTEEMLARKKEQDA) adopt a coiled-coil conformation. Over residues 686–702 (KPPPAPIFQKPPAPQPN) the composition is skewed to pro residues. The span at 759–773 (QVQAQGQGHPQAHLQ) shows a compositional bias: low complexity. Residues 774 to 796 (THPQGVSQPNGVNSPMPNGQQML) are compositionally biased toward polar residues.

This sequence belongs to the enhancer of polycomb family. Component of the NuA4 histone acetyltransferase complex.

The protein localises to the nucleus. Component of the NuA4 histone acetyltransferase complex which is involved in transcriptional activation of selected genes principally by acetylation of nucleosomal histone H4 and H2A. The NuA4 complex is also involved in DNA repair. Involved in gene silencing by neighboring heterochromatin, blockage of the silencing spreading along the chromosome, and required for cell cycle progression through G2/M. This Cryptococcus neoformans var. neoformans serotype D (strain B-3501A) (Filobasidiella neoformans) protein is Enhancer of polycomb-like protein 1 (EPL1).